The primary structure comprises 370 residues: Maturase K (370 aa).

Belongs to the intron maturase 2 family. MatK subfamily.

The protein resides in the plastid. It is found in the chloroplast. Its function is as follows. Usually encoded in the trnK tRNA gene intron. Probably assists in splicing its own and other chloroplast group II introns. In Marchantia polymorpha (Common liverwort), this protein is Maturase K.